The primary structure comprises 310 residues: tRNA dimethylallyltransferase (310 aa).

11–18 (GPTAVGKT) contacts ATP. 13-18 (TAVGKT) is a binding site for substrate. The interaction with substrate tRNA stretch occupies residues 36–39 (DSMQ).

This sequence belongs to the IPP transferase family. As to quaternary structure, monomer. Mg(2+) serves as cofactor.

The enzyme catalyses adenosine(37) in tRNA + dimethylallyl diphosphate = N(6)-dimethylallyladenosine(37) in tRNA + diphosphate. Its function is as follows. Catalyzes the transfer of a dimethylallyl group onto the adenine at position 37 in tRNAs that read codons beginning with uridine, leading to the formation of N6-(dimethylallyl)adenosine (i(6)A). In Shouchella clausii (strain KSM-K16) (Alkalihalobacillus clausii), this protein is tRNA dimethylallyltransferase.